The chain runs to 1101 residues: Protein diaphanous homolog 2 (1101 aa).

Met-1 is subject to N-acetylmethionine. The interval 1–44 (MEQPGAAASGAGGGSEEPGGGRSNKRSAGNRAANEEETKNKPKL) is disordered. The segment covering 10-22 (GAGGGSEEPGGGR) has biased composition (gly residues). In terms of domain architecture, GBD/FH3 spans 98–464 (SLNLSEKEVL…QIVLHCSGMD (367 aa)). 2 coiled-coil regions span residues 366 to 418 (KEKE…MLKD) and 487 to 547 (KAKV…SSSG). Residues 536 to 546 (RTQAQVLSSSS) are compositionally biased toward polar residues. Disordered regions lie at residues 536 to 594 (RTQA…PPPP), 1010 to 1048 (NKRREMEEKTRRAKLAKEKAEQEKLERQKKKKQLIDINK), and 1070 to 1101 (RDRRKRIPRNPDNRRVPLERSRSRHNGAISSK). A compositionally biased stretch (pro residues) spans 549–594 (PGPPAAPPLPGVGPPPPPPAPPLPGGAPLPPPPPPLPGMMGIPPPP). The FH1 domain maps to 549 to 623 (PGPPAAPPLP…PPPGISLNLP (75 aa)). Residues 628-1028 (QKKMYKPEVS…TRRAKLAKEK (401 aa)) form the FH2 domain. Residues 903 to 1053 (SASKVSAQIL…IDINKEGDET (151 aa)) adopt a coiled-coil conformation. 2 stretches are compositionally biased toward basic and acidic residues: residues 1010 to 1035 (NKRREMEEKTRRAKLAKEKAEQEKLE) and 1078 to 1090 (RNPDNRRVPLERS). Positions 1051–1081 (DETGVMDNLLEALQSGAAFRDRRKRIPRNPD) constitute a DAD domain.

The protein belongs to the formin homology family. Diaphanous subfamily. As to quaternary structure, isoform 3 interacts with RHOD in the GTP-bound form. In terms of tissue distribution, expressed in testis, ovary, small intestine, prostate, lung, liver, kidney and leukocytes.

The protein resides in the cytoplasm. It is found in the cytosol. Its subcellular location is the early endosome. In terms of biological role, could be involved in oogenesis. Involved in the regulation of endosome dynamics. Implicated in a novel signal transduction pathway, in which isoform 3 and CSK are sequentially activated by RHOD to regulate the motility of early endosomes through interactions with the actin cytoskeleton. This chain is Protein diaphanous homolog 2 (DIAPH2), found in Homo sapiens (Human).